Reading from the N-terminus, the 209-residue chain is Putative BTB/POZ domain-containing protein At2g40450 (209 aa).

Residues 24 to 98 (ADVRLKAGDS…IYRVDGSICS (75 aa)) enclose the BTB domain.

It participates in protein modification; protein ubiquitination. May act as a substrate-specific adapter of an E3 ubiquitin-protein ligase complex (CUL3-RBX1-BTB) which mediates the ubiquitination and subsequent proteasomal degradation of target proteins. This chain is Putative BTB/POZ domain-containing protein At2g40450, found in Arabidopsis thaliana (Mouse-ear cress).